Here is a 108-residue protein sequence, read N- to C-terminus: uncharacterized protein (108 aa).

The segment covering 1–14 has biased composition (polar residues); sequence MSDSNSRLVYSTET. Residues 1–31 are disordered; sequence MSDSNSRLVYSTETGRIDEPKAAPVRPKGDG. Positions 15 to 31 are enriched in basic and acidic residues; it reads GRIDEPKAAPVRPKGDG.

The protein belongs to the SUI1 family.

This is an uncharacterized protein from Escherichia coli (strain K12).